We begin with the raw amino-acid sequence, 257 residues long: Hydroxyacylglutathione hydrolase (257 aa).

The Zn(2+) site is built by histidine 54, histidine 56, aspartate 58, histidine 59, histidine 113, aspartate 137, and histidine 175.

It belongs to the metallo-beta-lactamase superfamily. Glyoxalase II family. In terms of assembly, monomer. Zn(2+) serves as cofactor.

It catalyses the reaction an S-(2-hydroxyacyl)glutathione + H2O = a 2-hydroxy carboxylate + glutathione + H(+). It participates in secondary metabolite metabolism; methylglyoxal degradation; (R)-lactate from methylglyoxal: step 2/2. Thiolesterase that catalyzes the hydrolysis of S-D-lactoyl-glutathione to form glutathione and D-lactic acid. This chain is Hydroxyacylglutathione hydrolase, found in Rippkaea orientalis (strain PCC 8801 / RF-1) (Cyanothece sp. (strain PCC 8801)).